The primary structure comprises 197 residues: Holliday junction branch migration complex subunit RuvA (197 aa).

A domain I region spans residues 1 to 64 (MIGHLEGRLR…EDAIQLYGFR (64 aa)). The segment at 65 to 143 (TVAEKDMFLR…VKKGREAEQP (79 aa)) is domain II. The tract at residues 144–145 (AP) is flexible linker. Residues 146-197 (AAESSYGDAYSALVNLGYRPAEAEKALGKAIKSLGADPPVEKLLKETLRLLA) are domain III.

Belongs to the RuvA family. Homotetramer. Forms an RuvA(8)-RuvB(12)-Holliday junction (HJ) complex. HJ DNA is sandwiched between 2 RuvA tetramers; dsDNA enters through RuvA and exits via RuvB. An RuvB hexamer assembles on each DNA strand where it exits the tetramer. Each RuvB hexamer is contacted by two RuvA subunits (via domain III) on 2 adjacent RuvB subunits; this complex drives branch migration. In the full resolvosome a probable DNA-RuvA(4)-RuvB(12)-RuvC(2) complex forms which resolves the HJ.

The protein localises to the cytoplasm. Its function is as follows. The RuvA-RuvB-RuvC complex processes Holliday junction (HJ) DNA during genetic recombination and DNA repair, while the RuvA-RuvB complex plays an important role in the rescue of blocked DNA replication forks via replication fork reversal (RFR). RuvA specifically binds to HJ cruciform DNA, conferring on it an open structure. The RuvB hexamer acts as an ATP-dependent pump, pulling dsDNA into and through the RuvAB complex. HJ branch migration allows RuvC to scan DNA until it finds its consensus sequence, where it cleaves and resolves the cruciform DNA. The sequence is that of Holliday junction branch migration complex subunit RuvA from Syntrophobacter fumaroxidans (strain DSM 10017 / MPOB).